A 91-amino-acid chain; its full sequence is Sec-independent protein translocase protein TatA (91 aa).

The helical transmembrane segment at 2-22 (ANLGFPELVLIAVVILVLFGW) threads the bilayer. Residues 43–55 (VSEMKNDGAEAEK) are compositionally biased toward basic and acidic residues. Positions 43-91 (VSEMKNDGAEAEKTSAASTKTDEITSVSSTDTPQPTVTVESKDEKKHPA) are disordered. Residues 57 to 81 (SAASTKTDEITSVSSTDTPQPTVTV) show a composition bias toward polar residues. A compositionally biased stretch (basic and acidic residues) spans 82–91 (ESKDEKKHPA).

This sequence belongs to the TatA/E family. In terms of assembly, the Tat system comprises two distinct complexes: a TatABC complex, containing multiple copies of TatA, TatB and TatC subunits, and a separate TatA complex, containing only TatA subunits. Substrates initially bind to the TatABC complex, which probably triggers association of the separate TatA complex to form the active translocon.

It is found in the cell membrane. In terms of biological role, part of the twin-arginine translocation (Tat) system that transports large folded proteins containing a characteristic twin-arginine motif in their signal peptide across membranes. TatA could form the protein-conducting channel of the Tat system. This is Sec-independent protein translocase protein TatA from Corynebacterium kroppenstedtii (strain DSM 44385 / JCM 11950 / CIP 105744 / CCUG 35717).